A 1305-amino-acid chain; its full sequence is Serine protease EspC (1305 aa).

The first 53 residues, Met1–Ala53, serve as a signal peptide directing secretion. The Peptidase S6 domain maps to Gln55–Thr297. Residues His125, Asp153, and Ser256 each act as charge relay system in the active site. An Autotransporter domain is found at Asp1039 to Phe1305.

Cleaved to release the mature protein from the outer membrane.

It localises to the periplasm. It is found in the secreted. Its subcellular location is the cell surface. The protein resides in the cell outer membrane. With respect to regulation, inhibition of cytotoxic activity by phenylmethylsulfonyl fluoride. Functionally, serine protease with enterotoxic and cytotoxic activities. Cleaves fodrin, but does not cause its redistribution within epithelial cells. The exact role of EspC in EPEC pathogenesis is still unknown. In Escherichia coli O127:H6 (strain E2348/69 / EPEC), this protein is Serine protease EspC (espC).